A 124-amino-acid polypeptide reads, in one-letter code: Pal-related lipoprotein (124 aa).

Positions 1-18 (MRYRAVFPMLIIVFALSG) are cleaved as a signal peptide. Cysteine 19 carries the N-palmitoyl cysteine lipid modification. The S-diacylglycerol cysteine moiety is linked to residue cysteine 19.

Its subcellular location is the cell membrane. The sequence is that of Pal-related lipoprotein (slp) from Bacillus subtilis (strain 168).